Reading from the N-terminus, the 306-residue chain is MLKGKSLLTLLDFSNYEIESIINLSFSMKSFVNLNSVPKTLENKKIALIFEKPSTRTRISTELAVKLLGGTSIVLSKSDIQLGRGETVEDTARVLGRYVDGIGARVLNHNSLEILSKYSRKPVINLLSDVSHPLQALTDFMTVKERFGTYTNMAFIGDGTDNVLTSLMEFVSKMGLELRVASPKEFRPKQEVWRRIEEESEKSGAIIEFYEDPYEAVRGVKVVYTDVWVSMGQESIAEEKKKKLKDYKVTRDLMRYASKDAIFMHCLPAVRGEEVEDDVIDGHQSAVWDQAENRLYTAMAVLSLFI.

Residues 54–57 (STRT), Q81, R105, and 132–135 (HPLQ) each bind carbamoyl phosphate. L-ornithine contacts are provided by residues N162, D226, and 230-231 (SM). Carbamoyl phosphate is bound by residues 266 to 267 (CL) and R294.

It belongs to the aspartate/ornithine carbamoyltransferase superfamily. OTCase family.

It is found in the cytoplasm. It catalyses the reaction carbamoyl phosphate + L-ornithine = L-citrulline + phosphate + H(+). It functions in the pathway amino-acid biosynthesis; L-arginine biosynthesis; L-arginine from L-ornithine and carbamoyl phosphate: step 1/3. Functionally, reversibly catalyzes the transfer of the carbamoyl group from carbamoyl phosphate (CP) to the N(epsilon) atom of ornithine (ORN) to produce L-citrulline. This Sulfolobus acidocaldarius (strain ATCC 33909 / DSM 639 / JCM 8929 / NBRC 15157 / NCIMB 11770) protein is Ornithine carbamoyltransferase.